The primary structure comprises 564 residues: O-fucosyltransferase 5 (564 aa).

The disordered stretch occupies residues 1-28; it reads MVRNSSDEEEDHRNLIPQNDTRDNDLNL. Residues 70–90 traverse the membrane as a helical; Signal-anchor for type II membrane protein segment; sequence YVVAAVSLTLFVGLLFLFTDT. N-linked (GlcNAc...) asparagine glycosylation is found at asparagine 129, asparagine 134, and asparagine 174. Residues 413–415 and 529–530 contribute to the substrate site; these read HLR and TF.

The protein belongs to the glycosyltransferase GT106 family.

The protein localises to the membrane. It functions in the pathway glycan metabolism. The protein is O-fucosyltransferase 5 of Arabidopsis thaliana (Mouse-ear cress).